A 147-amino-acid polypeptide reads, in one-letter code: uncharacterized protein (147 aa).

The protein to M.pneumoniae MPN_465.

This is an uncharacterized protein from Mycoplasma pneumoniae (strain ATCC 29342 / M129 / Subtype 1) (Mycoplasmoides pneumoniae).